The primary structure comprises 209 residues: Guanylate kinase (209 aa).

Residues 5–182 (GLLIVISGPS…AVTKINSIIV (178 aa)) enclose the Guanylate kinase-like domain. ATP is bound at residue 12-19 (GPSGAGKG).

Belongs to the guanylate kinase family.

Its subcellular location is the cytoplasm. The catalysed reaction is GMP + ATP = GDP + ADP. Its function is as follows. Essential for recycling GMP and indirectly, cGMP. This chain is Guanylate kinase, found in Clostridium acetobutylicum (strain ATCC 824 / DSM 792 / JCM 1419 / IAM 19013 / LMG 5710 / NBRC 13948 / NRRL B-527 / VKM B-1787 / 2291 / W).